The primary structure comprises 101 residues: Ubiquitin-related modifier 1 (101 aa).

Position 101 is a 1-thioglycine (glycine 101). Glycine 101 participates in a covalent cross-link: Glycyl lysine isopeptide (Gly-Lys) (interchain with K-? in acceptor proteins).

It belongs to the URM1 family. In terms of processing, C-terminal thiocarboxylation occurs in 2 steps, it is first acyl-adenylated (-COAMP) via the hesA/moeB/thiF part of UBA4, then thiocarboxylated (-COSH) via the rhodanese domain of UBA4.

The protein localises to the cytoplasm. It participates in tRNA modification; 5-methoxycarbonylmethyl-2-thiouridine-tRNA biosynthesis. In terms of biological role, acts as a sulfur carrier required for 2-thiolation of mcm(5)S(2)U at tRNA wobble positions of cytosolic tRNA(Lys), tRNA(Glu) and tRNA(Gln). Serves as sulfur donor in tRNA 2-thiolation reaction by being thiocarboxylated (-COSH) at its C-terminus by the MOCS3 homolog UBA4. The sulfur is then transferred to tRNA to form 2-thiolation of mcm(5)S(2)U. Prior mcm(5) tRNA modification by the elongator complex is required for 2-thiolation. Also acts as a ubiquitin-like protein (UBL) that is covalently conjugated via an isopeptide bond to lysine residues of target proteins such as AHP1. The thiocarboxylated form serves as substrate for conjugation and oxidative stress specifically induces the formation of UBL-protein conjugates. This Debaryomyces hansenii (strain ATCC 36239 / CBS 767 / BCRC 21394 / JCM 1990 / NBRC 0083 / IGC 2968) (Yeast) protein is Ubiquitin-related modifier 1.